Consider the following 826-residue polypeptide: Periplasmic nitrate reductase (826 aa).

Residues 1 to 32 constitute a signal peptide (tat-type signal); it reads MELNRRDFMKANAAIAAAAAAGITIPVKNVQA. The 4Fe-4S Mo/W bis-MGD-type domain occupies 37–93; sequence IRWDKAPCRYCGTGCSVLVGTKDGRVVATQGDPDAEVNRGLNCIKGYFLSKIMYGAD. Cys44, Cys47, Cys51, and Cys79 together coordinate [4Fe-4S] cluster. Residues Lys81, Gln148, Asn173, Cys177, 210 to 217, 241 to 245, 260 to 262, Met370, Gln374, Asn480, 506 to 507, Lys529, Asp556, and 716 to 725 each bind Mo-bis(molybdopterin guanine dinucleotide); these read WGSNMAEM, STYEH, QSD, SD, and TGRVLEHWHT. Phe792 contributes to the substrate binding site. Residues Asn800 and Lys817 each coordinate Mo-bis(molybdopterin guanine dinucleotide).

It belongs to the prokaryotic molybdopterin-containing oxidoreductase family. NasA/NapA/NarB subfamily. As to quaternary structure, component of the periplasmic nitrate reductase NapAB complex composed of NapA and NapB. It depends on [4Fe-4S] cluster as a cofactor. The cofactor is Mo-bis(molybdopterin guanine dinucleotide). In terms of processing, predicted to be exported by the Tat system. The position of the signal peptide cleavage has not been experimentally proven.

The protein localises to the periplasm. The enzyme catalyses 2 Fe(II)-[cytochrome] + nitrate + 2 H(+) = 2 Fe(III)-[cytochrome] + nitrite + H2O. Catalytic subunit of the periplasmic nitrate reductase complex NapAB. Receives electrons from NapB and catalyzes the reduction of nitrate to nitrite. This chain is Periplasmic nitrate reductase, found in Actinobacillus succinogenes (strain ATCC 55618 / DSM 22257 / CCUG 43843 / 130Z).